The chain runs to 342 residues: Delta-aminolevulinic acid dehydratase (342 aa).

The Zn(2+) site is built by C133, C135, and C143. The active-site Schiff-base intermediate with substrate is the K210. 2 residues coordinate 5-aminolevulinate: R220 and R232. S254 is modified (phosphoserine). K263 serves as the catalytic Schiff-base intermediate with substrate. 5-aminolevulinate contacts are provided by S290 and Y329.

This sequence belongs to the ALAD family. In terms of assembly, homooctamer. It depends on Zn(2+) as a cofactor.

It catalyses the reaction 2 5-aminolevulinate = porphobilinogen + 2 H2O + H(+). It participates in porphyrin-containing compound metabolism; protoporphyrin-IX biosynthesis; coproporphyrinogen-III from 5-aminolevulinate: step 1/4. Its activity is regulated as follows. Inhibited by divalent lead ions. Catalyzes an early step in the biosynthesis of tetrapyrroles. Binds two molecules of 5-aminolevulinate per subunit, each at a distinct site, and catalyzes their condensation to form porphobilinogen. The protein is Delta-aminolevulinic acid dehydratase (HEM2) of Saccharomyces cerevisiae (strain ATCC 204508 / S288c) (Baker's yeast).